Reading from the N-terminus, the 184-residue chain is Large ribosomal subunit protein bL9 (184 aa).

Positions 156-184 (RQAKLQNQKSEQQEAEQDASKEAADADDS) are disordered. The segment covering 173–184 (DASKEAADADDS) has biased composition (basic and acidic residues).

The protein belongs to the bacterial ribosomal protein bL9 family.

Binds to the 23S rRNA. In Wolbachia pipientis subsp. Culex pipiens (strain wPip), this protein is Large ribosomal subunit protein bL9.